Reading from the N-terminus, the 199-residue chain is 7-methyl-GTP pyrophosphatase (199 aa).

The active-site Proton acceptor is the aspartate 74.

It belongs to the Maf family. YceF subfamily. Requires a divalent metal cation as cofactor.

It is found in the cytoplasm. It carries out the reaction N(7)-methyl-GTP + H2O = N(7)-methyl-GMP + diphosphate + H(+). Nucleoside triphosphate pyrophosphatase that hydrolyzes 7-methyl-GTP (m(7)GTP). May have a dual role in cell division arrest and in preventing the incorporation of modified nucleotides into cellular nucleic acids. This chain is 7-methyl-GTP pyrophosphatase, found in Cupriavidus metallidurans (strain ATCC 43123 / DSM 2839 / NBRC 102507 / CH34) (Ralstonia metallidurans).